The following is a 146-amino-acid chain: Large ribosomal subunit protein uL15 (146 aa).

Residues 1–51 form a disordered region; the sequence is MKLHELQPAAGSRKVRNRVGRGTSSGNGKTSGRGQKGQKARSGGGVRLGFE. Composition is skewed to gly residues over residues 23 to 35 and 42 to 51; these read TSSG…GRGQ and SGGGVRLGFE.

It belongs to the universal ribosomal protein uL15 family. Part of the 50S ribosomal subunit.

Binds to the 23S rRNA. The protein is Large ribosomal subunit protein uL15 of Streptococcus sanguinis (strain SK36).